The following is a 401-amino-acid chain: 2,3,4,5-tetrahydropyridine-2,6-dicarboxylate N-succinyltransferase (401 aa).

Residue E269 is the Acyl-anhydride intermediate of the active site. Residues R271, G286, S289, A312, 327–328 (DA), G335, and K364 contribute to the succinyl-CoA site.

It belongs to the type 2 tetrahydrodipicolinate N-succinyltransferase family. Homotrimer.

Its subcellular location is the cytoplasm. It catalyses the reaction (S)-2,3,4,5-tetrahydrodipicolinate + succinyl-CoA + H2O = (S)-2-succinylamino-6-oxoheptanedioate + CoA. The protein operates within amino-acid biosynthesis; L-lysine biosynthesis via DAP pathway; LL-2,6-diaminopimelate from (S)-tetrahydrodipicolinate (succinylase route): step 1/3. Functionally, catalyzes the conversion of the cyclic tetrahydrodipicolinate (THDP) into the acyclic N-succinyl-L-2-amino-6-oxopimelate using succinyl-CoA. In Helicobacter pylori (strain ATCC 700392 / 26695) (Campylobacter pylori), this protein is 2,3,4,5-tetrahydropyridine-2,6-dicarboxylate N-succinyltransferase.